The following is a 151-amino-acid chain: Potassium/proton antiporter CemA (151 aa).

2 helical membrane-spanning segments follow: residues L7–F27 and I107–G127.

It belongs to the CemA family.

The protein resides in the plastid. It localises to the chloroplast inner membrane. It catalyses the reaction K(+)(in) + H(+)(out) = K(+)(out) + H(+)(in). Functionally, contributes to K(+)/H(+) antiport activity by supporting proton efflux to control proton extrusion and homeostasis in chloroplasts in a light-dependent manner to modulate photosynthesis. Prevents excessive induction of non-photochemical quenching (NPQ) under continuous-light conditions. Indirectly promotes efficient inorganic carbon uptake into chloroplasts. The polypeptide is Potassium/proton antiporter CemA (Aegilops crassa (Persian goatgrass)).